Reading from the N-terminus, the 292-residue chain is Ribonuclease HIII (292 aa).

One can recognise an RNase H type-2 domain in the interval 76 to 292 (TNLIGTDEVG…TQKAMKIAQL (217 aa)). Asp82, Glu83, and Asp186 together coordinate a divalent metal cation.

This sequence belongs to the RNase HII family. RnhC subfamily. The cofactor is Mn(2+). It depends on Mg(2+) as a cofactor.

The protein resides in the cytoplasm. It catalyses the reaction Endonucleolytic cleavage to 5'-phosphomonoester.. Functionally, endonuclease that specifically degrades the RNA of RNA-DNA hybrids. This chain is Ribonuclease HIII, found in Lactococcus lactis subsp. cremoris (strain SK11).